Here is a 366-residue protein sequence, read N- to C-terminus: MDFLNSSDQNLTSEELLNRMPSKILVSLTLSGLALMTTTINSLVIAAIIVTRKLHHPANYLICSLAVTDFLVAVLVMPFSIVYIVRESWIMGQVVCDIWLSVDITCCTCSILHLSAIALDRYRAITDAVEYARKRTPKHAGIMITIVWIISVFISMPPLFWRHQGTSRDDECIIKHDHIVSTIYSTFGAFYIPLALILILYYKIYRAAKTLYHKRQASRIAKEEVNGQVLLESGEKSTKSVSTSYVLEKSLSDPSTDFDKIHSTVRSLRSEFKHEKSWRRQKISGTRERKAATTLGLILGAFVICWLPFFVKELVVNVCDKCKISEEMSNFLAWLGYLNSLINPLIYTIFNEDFKKAFQKLVRCRC.

Residues 1 to 24 (MDFLNSSDQNLTSEELLNRMPSKI) lie on the Extracellular side of the membrane. Residues N5 and N10 are each glycosylated (N-linked (GlcNAc...) asparagine). A helical membrane pass occupies residues 25–49 (LVSLTLSGLALMTTTINSLVIAAII). Over 50 to 59 (VTRKLHHPAN) the chain is Cytoplasmic. The chain crosses the membrane as a helical span at residues 60-81 (YLICSLAVTDFLVAVLVMPFSI). The Extracellular portion of the chain corresponds to 82 to 96 (VYIVRESWIMGQVVC). C96 and C172 form a disulfide bridge. Residues 97–119 (DIWLSVDITCCTCSILHLSAIAL) traverse the membrane as a helical segment. Serotonin is bound by residues D103 and C107. The short motif at 120–122 (DRY) is the DRY motif; important for ligand-induced conformation changes element. Topologically, residues 120–139 (DRYRAITDAVEYARKRTPKH) are cytoplasmic. Residues 140–159 (AGIMITIVWIISVFISMPPL) form a helical membrane-spanning segment. Residues 160-178 (FWRHQGTSRDDECIIKHDH) are Extracellular-facing. A helical membrane pass occupies residues 179–202 (IVSTIYSTFGAFYIPLALILILYY). The Cytoplasmic portion of the chain corresponds to 203 to 291 (KIYRAAKTLY…KISGTRERKA (89 aa)). Residues 292-315 (ATTLGLILGAFVICWLPFFVKELV) traverse the membrane as a helical segment. The Extracellular portion of the chain corresponds to 316–327 (VNVCDKCKISEE). A helical membrane pass occupies residues 328 to 350 (MSNFLAWLGYLNSLINPLIYTIF). Residues 343–347 (NPLIY) carry the NPxxY motif; important for ligand-induced conformation changes and signaling motif. At 351–366 (NEDFKKAFQKLVRCRC) the chain is on the cytoplasmic side.

It belongs to the G-protein coupled receptor 1 family.

The protein localises to the cell membrane. In terms of biological role, G-protein coupled receptor for 5-hydroxytryptamine (serotonin). Also functions as a receptor for various alkaloids and psychoactive substances. Receptor for lasmiditan, a drug for the treatment of acute migraine. Ligand binding causes a conformation change that triggers signaling via guanine nucleotide-binding proteins (G proteins) and modulates the activity of downstream effectors, such as adenylate cyclase. HTR1F is coupled to G(i)/G(o) G alpha proteins and mediates inhibitory neurotransmission by inhibiting adenylate cyclase activity. This is 5-hydroxytryptamine receptor 1F from Homo sapiens (Human).